The primary structure comprises 158 residues: Anti-tumor lectin (158 aa).

Residue glutamine 1 is modified to Blocked amino end (Gln). Residues threonine 12–threonine 155 form the Galectin domain. N-acetyl-alpha-neuraminyl-(2-&gt;3)-beta-D-galactosyl-(1-&gt;4)-beta-D-glucose contacts are provided by asparagine 43, histidine 59, arginine 63, asparagine 72, arginine 74, tryptophan 80, and glutamate 83.

In terms of assembly, homodimer. Detected in the fruiting body.

Functionally, anti-tumor lectin with DNase activity. Inhibits the growth of several tumor cell lines in vitro. Induces lymphocyte infiltration and necrosis of tumor cells in a mouse tumor model. Induces apoptosis in HeLa cells. Binds N-acetylneuraminyl lactose (N-acetyl-alpha-neuraminyl-(2-&gt;3)-beta-D-galactosyl-(1-&gt;4)-beta-D-glucose). The protein is Anti-tumor lectin of Cyclocybe aegerita (Black poplar mushroom).